Consider the following 460-residue polypeptide: ATP synthase subunit beta (460 aa).

Residue 150–157 coordinates ATP; it reads GGAGVGKT.

Belongs to the ATPase alpha/beta chains family. F-type ATPases have 2 components, CF(1) - the catalytic core - and CF(0) - the membrane proton channel. CF(1) has five subunits: alpha(3), beta(3), gamma(1), delta(1), epsilon(1). CF(0) has three main subunits: a(1), b(2) and c(9-12). The alpha and beta chains form an alternating ring which encloses part of the gamma chain. CF(1) is attached to CF(0) by a central stalk formed by the gamma and epsilon chains, while a peripheral stalk is formed by the delta and b chains.

The protein resides in the cell inner membrane. It catalyses the reaction ATP + H2O + 4 H(+)(in) = ADP + phosphate + 5 H(+)(out). Produces ATP from ADP in the presence of a proton gradient across the membrane. The catalytic sites are hosted primarily by the beta subunits. This chain is ATP synthase subunit beta, found in Photorhabdus laumondii subsp. laumondii (strain DSM 15139 / CIP 105565 / TT01) (Photorhabdus luminescens subsp. laumondii).